A 459-amino-acid chain; its full sequence is MMTKNEIQKWVKEFPLLKTIMAAEEVFWRNPKYHAFAQAIRTIPLRERDVKEAEERLRRFAPYIAKAFPETRTAHGIIESPLVRISNMKQRLEKMFQTNIEGELLLKCDSHLPISGSIKARGGIYEVLKHAEDLALANGMITIGDDYAVMDSEKFRQFFSRYSLVVGSTGNLGLSIGIIGAKLGFRVTVHMSADAKQWKKDLLRSKGVTVIEHLTDYNKVVEEARRQSAEDPTSYFIDDENSIHLFLGYAVAAFRLKKQLEDMNITVDENHPLFVYLPCGVGGGPGGVTFGLKLVYGDHVHCFFAEPTHSPCMLLGLMTGEHDRVSVQDFGLDNKTEADGLAVGRPSRLVGNMLENVISGVYTVDDSTLYRLLAAMVETEEIYLEPSALAGVAGPVRLFRDLAGQTYVEANGLKEKMKNATHIGWATGGSMVPKDVMEAYYREGVRIETMTGNGFSEGR.

N6-(pyridoxal phosphate)lysine is present on lysine 119.

This sequence belongs to the serine/threonine dehydratase family. DsdA subfamily. The cofactor is pyridoxal 5'-phosphate.

It catalyses the reaction D-serine = pyruvate + NH4(+). The polypeptide is Probable D-serine dehydratase (Geobacillus stearothermophilus (Bacillus stearothermophilus)).